Consider the following 784-residue polypeptide: Kinesin-like protein 6 (784 aa).

Positions 6 to 389 constitute a Kinesin motor domain; that stretch reads SISVAVRVRP…LKYGNRAKNI (384 aa). An ATP-binding site is contributed by 134–141; that stretch reads GATGCGKT. Coiled-coil stretches lie at residues 405–440 and 463–483; these read SEYV…EVRK and RDLQ…EDEI. A disordered region spans residues 677–715; sequence SEVPTTSSVPPVEIKNKDSKPKVEKSLDKHNMNNDRSFL. The span at 690-709 shows a compositional bias: basic and acidic residues; sequence IKNKDSKPKVEKSLDKHNMN.

It belongs to the TRAFAC class myosin-kinesin ATPase superfamily. Kinesin family. Kinesin II subfamily. Heterodimer with klp5.

The protein resides in the cytoplasm. The protein localises to the cytoskeleton. It is found in the chromosome. Its subcellular location is the centromere. It localises to the kinetochore. The protein resides in the spindle. Its function is as follows. Has a role in establishing metaphase during mitosis. Required for chromosome segregation where it generates tension during kinetochore capturing. The chain is Kinesin-like protein 6 (klp6) from Schizosaccharomyces pombe (strain 972 / ATCC 24843) (Fission yeast).